A 100-amino-acid chain; its full sequence is UPF0125 protein CV_3462 (100 aa).

Belongs to the UPF0125 (RnfH) family.

This chain is UPF0125 protein CV_3462, found in Chromobacterium violaceum (strain ATCC 12472 / DSM 30191 / JCM 1249 / CCUG 213 / NBRC 12614 / NCIMB 9131 / NCTC 9757 / MK).